Consider the following 442-residue polypeptide: MSSSSDTHAGESRHRRNPIRWLLGFGFFVQGFRGFPWLGANFFLTEQLRVNPSVLQLLQNSANLPMVAKPIYGVVSDSVYFFGQHRIPYIAVGALLQAISWLAIAFLSRSNVSILALSIYLLLSNLGASLVEVANDAIVAESGKQKTSETQSGELPSFVWMVSSLGGILGNLLGGIAIKTFSAQSTFLVFGILALLQFLVTINIREKSLNLPENPSPAGGIRKHLSDLSHVLRKPEISYSIAWIAVSTAVVPVLTGTMFFYQTKFLKIDASLLGISKVFGQIAMLLWGFAYNRWLKAMRPRKLLTAIQVTIAFFVISDLLFVKGVYRDLGVSDSVYVLFFSGFLETLFYFKILPFTVLMARLCPPGCEGSLMAFVMSAIALAFIVSGYLGIVLASFVGVTEDDFSGFTRGLAIEACCVGIPLILTSWIYDEAETKEKSKKIE.

12 helical membrane passes run 23–43 (LGFG…ANFF), 64–82 (LPMV…VYFF), 87–107 (IPYI…IAFL), 114–134 (ILAL…VEVA), 158–178 (FVWM…GIAI), 184–204 (QSTF…TINI), 241–261 (IAWI…MFFY), 270–290 (ASLL…WGFA), 302–322 (KLLT…LLFV), 335–355 (VYVL…ILPF), 379–399 (IALA…FVGV), and 410–430 (GLAI…WIYD).

Belongs to the major facilitator superfamily. Folate-biopterin transporter (TC 2.A.71) family.

The protein resides in the membrane. Could mediate folate transport. In Arabidopsis thaliana (Mouse-ear cress), this protein is Probable folate-biopterin transporter 7.